The chain runs to 485 residues: Glutamyl-tRNA(Gln) amidotransferase subunit A (485 aa).

Active-site charge relay system residues include K75 and S150. The Acyl-ester intermediate role is filled by S174.

The protein belongs to the amidase family. GatA subfamily. Heterotrimer of A, B and C subunits.

It catalyses the reaction L-glutamyl-tRNA(Gln) + L-glutamine + ATP + H2O = L-glutaminyl-tRNA(Gln) + L-glutamate + ADP + phosphate + H(+). In terms of biological role, allows the formation of correctly charged Gln-tRNA(Gln) through the transamidation of misacylated Glu-tRNA(Gln) in organisms which lack glutaminyl-tRNA synthetase. The reaction takes place in the presence of glutamine and ATP through an activated gamma-phospho-Glu-tRNA(Gln). This Trichodesmium erythraeum (strain IMS101) protein is Glutamyl-tRNA(Gln) amidotransferase subunit A.